Here is a 611-residue protein sequence, read N- to C-terminus: Urease subunit alpha 2 (611 aa).

Residues G154 to F611 form the Urease domain. H159, H161, and K242 together coordinate Ni(2+). K242 carries the post-translational modification N6-carboxylysine. H244 contacts substrate. Ni(2+) contacts are provided by H271 and H297. Residue H345 is the Proton donor of the active site. D385 contributes to the Ni(2+) binding site. The segment at G411 to D434 is disordered. Residues S418–D434 show a composition bias toward polar residues.

The protein belongs to the metallo-dependent hydrolases superfamily. Urease alpha subunit family. In terms of assembly, heterotrimer of UreA (gamma), UreB (beta) and UreC (alpha) subunits. Three heterotrimers associate to form the active enzyme. The cofactor is Ni cation. Carboxylation allows a single lysine to coordinate two nickel ions.

Its subcellular location is the cytoplasm. It catalyses the reaction urea + 2 H2O + H(+) = hydrogencarbonate + 2 NH4(+). The protein operates within nitrogen metabolism; urea degradation; CO(2) and NH(3) from urea (urease route): step 1/1. The sequence is that of Urease subunit alpha 2 from Psychrobacter cryohalolentis (strain ATCC BAA-1226 / DSM 17306 / VKM B-2378 / K5).